Reading from the N-terminus, the 264-residue chain is Ribonuclease HII (264 aa).

The region spanning 33–224 (GPVAGVDEVG…VRRVASGSNT (192 aa)) is the RNase H type-2 domain. Residues aspartate 39, glutamate 40, and aspartate 133 each coordinate a divalent metal cation. Residues 222–264 (SNTAEVADGQPDPRDGTAQTGEGRWSKSSHPATMRATGRAQGT) form a disordered region.

The protein belongs to the RNase HII family. Requires Mn(2+) as cofactor. Mg(2+) is required as a cofactor.

The protein localises to the cytoplasm. The catalysed reaction is Endonucleolytic cleavage to 5'-phosphomonoester.. Its function is as follows. Endonuclease that specifically degrades the RNA of RNA-DNA hybrids. This Mycobacterium bovis (strain ATCC BAA-935 / AF2122/97) protein is Ribonuclease HII.